We begin with the raw amino-acid sequence, 332 residues long: 3-dehydrosphinganine reductase (332 aa).

A signal peptide spans 1 to 25 (MLLVVAAFIVAFVLLLYMISPLISP). G39, S41, S42, G43, R64, D65, K68, and D93 together coordinate NADPH. The short motif at 39 to 43 (GGSSG) is the GXSXG element. The Proton donor role is filled by S172. Y186 acts as the Proton acceptor in catalysis. Residues Y186 and K190 each contribute to the NADP(+) site. K190 functions as the Lowers pKa of active site Tyr in the catalytic mechanism.

The protein belongs to the short-chain dehydrogenases/reductases (SDR) family.

The protein resides in the endoplasmic reticulum. It carries out the reaction sphinganine + NADP(+) = 3-oxosphinganine + NADPH + H(+). It participates in lipid metabolism; sphingolipid metabolism. In terms of biological role, catalyzes the reduction of 3'-oxosphinganine (3-ketodihydrosphingosine/KDS) to sphinganine (dihydrosphingosine/DHS), the second step of de novo sphingolipid biosynthesis. The chain is 3-dehydrosphinganine reductase (kdsr) from Danio rerio (Zebrafish).